A 727-amino-acid chain; its full sequence is ATP-dependent zinc metalloprotease FtsH (727 aa).

Residues 1-6 (MQKAFR) are Cytoplasmic-facing. The chain crosses the membrane as a helical span at residues 7–27 (NVLVIAIIGVIIFGVFSYING). The Extracellular portion of the chain corresponds to 28–110 (NGNTPKQLSY…KVKEEEKQSV (83 aa)). The chain crosses the membrane as a helical span at residues 111–131 (FVSMLTTLIPVLIIAFLFIFF). Topologically, residues 132-727 (LSQAQGGGGG…PNDPNNPSNR (596 aa)) are cytoplasmic. 205 to 212 (GPPGTGKT) contributes to the ATP binding site. His-427 is a Zn(2+) binding site. Glu-428 is an active-site residue. Zn(2+) contacts are provided by His-431 and Asp-503. Basic and acidic residues-rich tracts occupy residues 645–684 (LEEGKEDMREDRKEDNDMNRERRHRQRDDRDNQTGHDQLR) and 691–706 (NDQHRGHSNNEEDTGH). The interval 645–727 (LEEGKEDMRE…PNDPNNPSNR (83 aa)) is disordered. The segment covering 710–727 (PNIDKPYNPNDPNNPSNR) has biased composition (low complexity).

This sequence in the central section; belongs to the AAA ATPase family. The protein in the C-terminal section; belongs to the peptidase M41 family. In terms of assembly, homohexamer. Zn(2+) is required as a cofactor.

It is found in the cell membrane. Its function is as follows. Acts as a processive, ATP-dependent zinc metallopeptidase for both cytoplasmic and membrane proteins. Plays a role in the quality control of integral membrane proteins. This chain is ATP-dependent zinc metalloprotease FtsH, found in Staphylococcus haemolyticus (strain JCSC1435).